Reading from the N-terminus, the 432-residue chain is Trigger factor (432 aa).

One can recognise a PPIase FKBP-type domain in the interval 161–246 (EDRVTLDFTG…LKKVEERELP (86 aa)).

This sequence belongs to the FKBP-type PPIase family. Tig subfamily.

It is found in the cytoplasm. It catalyses the reaction [protein]-peptidylproline (omega=180) = [protein]-peptidylproline (omega=0). In terms of biological role, involved in protein export. Acts as a chaperone by maintaining the newly synthesized protein in an open conformation. Functions as a peptidyl-prolyl cis-trans isomerase. This chain is Trigger factor, found in Salmonella arizonae (strain ATCC BAA-731 / CDC346-86 / RSK2980).